We begin with the raw amino-acid sequence, 135 residues long: Transcription antitermination protein NusB (135 aa).

Belongs to the NusB family.

In terms of biological role, involved in transcription antitermination. Required for transcription of ribosomal RNA (rRNA) genes. Binds specifically to the boxA antiterminator sequence of the ribosomal RNA (rrn) operons. The chain is Transcription antitermination protein NusB from Nocardioides sp. (strain ATCC BAA-499 / JS614).